The sequence spans 37 residues: Large ribosomal subunit protein bL36c (37 aa).

The protein belongs to the bacterial ribosomal protein bL36 family.

Its subcellular location is the plastid. The protein localises to the chloroplast. This chain is Large ribosomal subunit protein bL36c, found in Cryptomeria japonica (Japanese cedar).